We begin with the raw amino-acid sequence, 459 residues long: Argininosuccinate lyase (459 aa).

The protein belongs to the lyase 1 family. Argininosuccinate lyase subfamily.

The protein resides in the cytoplasm. The enzyme catalyses 2-(N(omega)-L-arginino)succinate = fumarate + L-arginine. The protein operates within amino-acid biosynthesis; L-arginine biosynthesis; L-arginine from L-ornithine and carbamoyl phosphate: step 3/3. The protein is Argininosuccinate lyase of Geobacillus kaustophilus (strain HTA426).